Reading from the N-terminus, the 60-residue chain is Large ribosomal subunit protein bL32 (60 aa).

This sequence belongs to the bacterial ribosomal protein bL32 family.

The polypeptide is Large ribosomal subunit protein bL32 (Thermosipho africanus (strain TCF52B)).